We begin with the raw amino-acid sequence, 491 residues long: Pentatricopeptide repeat-containing protein At5g27460 (491 aa).

PPR repeat units follow at residues 69–99, 105–139, 142–176, 177–211, 212–246, 248–278, 283–313, 318–348, 353–387, and 388–426; these read SLSE…MENQ, SVYD…SVSM, AKSA…GFLV, TPHP…KIPR, NVLS…KSVE, GWSS…AEKM, NRLG…SKSV, SCVN…WEAQ, DVRV…GGTP, and NYKT…HWRP.

Belongs to the PPR family. P subfamily.

This is Pentatricopeptide repeat-containing protein At5g27460 from Arabidopsis thaliana (Mouse-ear cress).